We begin with the raw amino-acid sequence, 392 residues long: Integrin-linked kinase-associated serine/threonine phosphatase 2C (392 aa).

At Met1 the chain carries N-acetylmethionine. The interval 1–91 is disordered; it reads MDLFGDLPEP…PEEEKNGGEE (91 aa). The span at 56–70 shows a compositional bias: polar residues; it reads SGNSGSLATSGSQVV. The span at 72–91 shows a compositional bias: basic and acidic residues; it reads TEGKGAKRKAPEEEKNGGEE. One can recognise a PPM-type phosphatase domain in the interval 108 to 390; it reads KGYVAERKGE…DNVTVMVVRI (283 aa). Positions 152 and 153 each coordinate Mn(2+). Lys210 is modified (N6-acetyllysine). The Mn(2+) site is built by Asp326 and Asp381.

Belongs to the PP2C family. As to quaternary structure, interacts with ILK. Requires Mg(2+) as cofactor. Mn(2+) is required as a cofactor.

The protein localises to the cytoplasm. It catalyses the reaction O-phospho-L-seryl-[protein] + H2O = L-seryl-[protein] + phosphate. The enzyme catalyses O-phospho-L-threonyl-[protein] + H2O = L-threonyl-[protein] + phosphate. Its function is as follows. Protein phosphatase that may play a role in regulation of cell cycle progression via dephosphorylation of its substrates whose appropriate phosphorylation states might be crucial for cell proliferation. Selectively associates with integrin linked kinase (ILK), to modulate cell adhesion and growth factor signaling. Inhibits the ILK-GSK3B signaling axis and may play an important role in inhibiting oncogenic transformation. This chain is Integrin-linked kinase-associated serine/threonine phosphatase 2C (Ilkap), found in Mus musculus (Mouse).